We begin with the raw amino-acid sequence, 276 residues long: 3beta-hydroxysteroid dehydrogenase (276 aa).

NADP(+) is bound by residues 70 to 71, asparagine 97, tyrosine 162, and lysine 166; that span reads DV. The active-site Proton acceptor is the tyrosine 162.

It belongs to the short-chain dehydrogenases/reductases (SDR) family.

The enzyme catalyses 3-oxo-5beta-cholan-24-oate + NADPH + H(+) = isolithocholate + NADP(+). The catalysed reaction is 12alpha-hydroxy-3-oxo-5beta-cholan-24-oate + NADPH + H(+) = isodeoxycholate + NADP(+). It carries out the reaction 12alpha-hydroxy-3-oxo-5beta-cholan-24-oate + NADH + H(+) = isodeoxycholate + NAD(+). It catalyses the reaction 7alpha,12alpha-dihydroxy-3-oxo-5beta-cholan-24-oate + NADPH + H(+) = isocholate + NADP(+). The enzyme catalyses 3-oxochenodeoxycholate + NADPH + H(+) = isochenodeoxycholate + NADP(+). Its function is as follows. Involved in the modification of secondary bile acids into iso-bile acids (3beta-bile acids) via epimerization of the 3-OH group through a 3-oxo-intermediate. Catalyzes the reduction of 12-alpha-hydroxy-3-oxo-5-beta-cholan-24-oate (3-oxo-DCA) and 3-oxo-5-beta-cholan-24-oate (3-oxo-LCA) to yield isodeoxycholate (isoDCA) and isolithocholate (isoLCA), respectively. Is also able to catalyze the reduction of 3-dehydrocholate (3-oxo-CA or 7alpha,12alpha-dihydroxy-3-oxo-5beta-cholan-24-oate) and 7-alpha-hydroxy-3-oxo-5-beta-cholan-24-oate (3-oxo-CDCA), into isocholate (isoCA) and isochenodeoxycholate (isoCDCA), respectively. Accepts both NADPH and NADH as cosubstrates. The conversion of the abundant bile acid deoxycholate (DCA) into isoDCA by the gut bacterium R.gnavus favors the growth of the keystone commensal genus Bacteroides, since isoDCA is less cytotoxic than its parent compound, DCA; iso-bile acids have thus a potential role in modulating gut community composition. The sequence is that of 3beta-hydroxysteroid dehydrogenase from Mediterraneibacter gnavus (strain ATCC 29149 / DSM 114966 / JCM 6515 / VPI C7-9) (Ruminococcus gnavus).